Here is a 272-residue protein sequence, read N- to C-terminus: Shikimate dehydrogenase (NADP(+)) (272 aa).

Shikimate contacts are provided by residues 14-16 and Thr-61; that span reads SKS. Lys-65 (proton acceptor) is an active-site residue. Position 77 (Glu-77) interacts with NADP(+). Asn-86 and Asp-102 together coordinate shikimate. Residues 126-130, 149-154, and Met-213 each bind NADP(+); these read GAGGA and NRTASR. Tyr-215 contacts shikimate. Gly-237 is an NADP(+) binding site.

It belongs to the shikimate dehydrogenase family. As to quaternary structure, homodimer.

It carries out the reaction shikimate + NADP(+) = 3-dehydroshikimate + NADPH + H(+). Its pathway is metabolic intermediate biosynthesis; chorismate biosynthesis; chorismate from D-erythrose 4-phosphate and phosphoenolpyruvate: step 4/7. Functionally, involved in the biosynthesis of the chorismate, which leads to the biosynthesis of aromatic amino acids. Catalyzes the reversible NADPH linked reduction of 3-dehydroshikimate (DHSA) to yield shikimate (SA). This Salmonella schwarzengrund (strain CVM19633) protein is Shikimate dehydrogenase (NADP(+)).